We begin with the raw amino-acid sequence, 303 residues long: Taste receptor type 2 member 13 (303 aa).

Residues 1–7 (MESALLS) are Extracellular-facing. A helical transmembrane segment spans residues 8 to 28 (ILTLVIIAEFVIGNLSNGFXV). Over 29 to 55 (LINCIDWVSKRQLSSVDKILTFLAISR) the chain is Cytoplasmic. The helical transmembrane segment at 56 to 76 (IGLIWELLVSWFLGLHYLAIF) threads the bilayer. The Extracellular portion of the chain corresponds to 77 to 85 (VSGTGLRIM). A helical membrane pass occupies residues 86-106 (IFSWVVSNHFSLWLATILSIF). The Cytoplasmic segment spans residues 107–128 (YLLKIASFSSPAFLYLKWRVNQ). A helical transmembrane segment spans residues 129–149 (VILMILLGTLVFLFLNLIQIN). Topologically, residues 150–184 (IHIKDWLDRCERNTIWNFSMSGLPTFSVPVKFTMT) are extracellular. Asn166 carries N-linked (GlcNAc...) asparagine glycosylation. A helical membrane pass occupies residues 185–205 (MFSLAPFTVALISFLLLIFSL). Over 206 to 232 (RKHLQKMQLNYKGHREPRTKAHINALK) the chain is Cytoplasmic. Residues 233 to 253 (IVISFLLLYASFFLCILISWI) traverse the membrane as a helical segment. The Extracellular segment spans residues 254 to 261 (SELYQNTL). The chain crosses the membrane as a helical span at residues 262-282 (IHMFCQTIGVFYPSSHSFLLI). At 283–303 (LGNPKLRQASLLVAAKVWAKR) the chain is on the cytoplasmic side.

The protein belongs to the G-protein coupled receptor T2R family.

The protein localises to the membrane. Its function is as follows. Receptor that may play a role in the perception of bitterness and is gustducin-linked. May play a role in sensing the chemical composition of the gastrointestinal content. The activity of this receptor may stimulate alpha gustducin, mediate PLC-beta-2 activation and lead to the gating of TRPM5. In Papio hamadryas (Hamadryas baboon), this protein is Taste receptor type 2 member 13 (TAS2R13).